Consider the following 452-residue polypeptide: MELLKLNRSLPGPGPGAALCRPEGPLLNGSGAGNLSCEPPRIRGAGTRELELAVRITLYAAIFLMSVAGNVLIIVVLGLSRRLRTVTNAFLLSLAVSDLLLAVACMPFTLLPNLMGTFIFGTVVCKAVSYFMGVSVSVSTLSLVAIALERYSAICRPLQARVWQTRSHAARVIVATWMLSGLLMVPYPVYTAVQPAGPRVLQCMHRWPSARIRQTWSVLLLLLLFFVPGVVMAVAYGLISRELYLGLRFDGDSDCESQSQVGSQGGLPGGAGQGPAHPNGHCRSETRLAGEDGDGCYVQLPRSRPALEMSALTAPTPGPGSGPRPAQAKLLAKKRVVRMLLVIVVLFFLCWLPVYSANTWRAFDGPGAHRALSGAPISFIHLLSYASACVNPLVYCFMHRRFRQACLDTCARCCPRPPRARPRPLPDEDPPTPSIASLSRLSYTTISTLGPG.

At 1–57 (MELLKLNRSLPGPGPGAALCRPEGPLLNGSGAGNLSCEPPRIRGAGTRELELAVRIT) the chain is on the extracellular side. N7, N28, and N34 each carry an N-linked (GlcNAc...) asparagine glycan. Residues 58 to 78 (LYAAIFLMSVAGNVLIIVVLG) traverse the membrane as a helical segment. The Cytoplasmic portion of the chain corresponds to 79–99 (LSRRLRTVTNAFLLSLAVSDL). A helical membrane pass occupies residues 100–120 (LLAVACMPFTLLPNLMGTFIF). Topologically, residues 121 to 127 (GTVVCKA) are extracellular. C125 and C203 form a disulfide bridge. A helical membrane pass occupies residues 128-148 (VSYFMGVSVSVSTLSLVAIAL). The Cytoplasmic portion of the chain corresponds to 149–171 (ERYSAICRPLQARVWQTRSHAAR). A helical membrane pass occupies residues 172 to 192 (VIVATWMLSGLLMVPYPVYTA). Over 193 to 218 (VQPAGPRVLQCMHRWPSARIRQTWSV) the chain is Extracellular. A helical transmembrane segment spans residues 219–239 (LLLLLLFFVPGVVMAVAYGLI). At 240–339 (SRELYLGLRF…LLAKKRVVRM (100 aa)) the chain is on the cytoplasmic side. The segment at 256–285 (ESQSQVGSQGGLPGGAGQGPAHPNGHCRSE) is disordered. Residues 263 to 273 (SQGGLPGGAGQ) show a composition bias toward gly residues. The chain crosses the membrane as a helical span at residues 340 to 360 (LLVIVVLFFLCWLPVYSANTW). Topologically, residues 361-376 (RAFDGPGAHRALSGAP) are extracellular. The helical transmembrane segment at 377–397 (ISFIHLLSYASACVNPLVYCF) threads the bilayer. Topologically, residues 398 to 452 (MHRRFRQACLDTCARCCPRPPRARPRPLPDEDPPTPSIASLSRLSYTTISTLGPG) are cytoplasmic. The S-palmitoyl cysteine moiety is linked to residue C413.

Belongs to the G-protein coupled receptor 1 family.

The protein localises to the cell membrane. Receptor for gastrin and cholecystokinin. The CCK-B receptors occur throughout the central nervous system where they modulate anxiety, analgesia, arousal, and neuroleptic activity. This receptor mediates its action by association with G proteins that activate a phosphatidylinositol-calcium second messenger system. The protein is Gastrin/cholecystokinin type B receptor of Sus scrofa (Pig).